We begin with the raw amino-acid sequence, 648 residues long: Macrolide export ATP-binding/permease protein MacB (648 aa).

The ABC transporter domain maps to 5-243 (LELCNVSRSY…QGVDAAVVNT (239 aa)). 41-48 (GVSGSGKS) is an ATP binding site. 5 consecutive transmembrane segments (helical) span residues 273–293 (LLTM…VVVG), 417–437 (ANVV…IGVA), 523–543 (LFLT…VMNI), 578–598 (LVCL…AFML), and 611–631 (LTAL…FGWL).

Belongs to the ABC transporter superfamily. Macrolide exporter (TC 3.A.1.122) family. As to quaternary structure, homodimer. Part of the tripartite efflux system MacAB-TolC, which is composed of an inner membrane transporter, MacB, a periplasmic membrane fusion protein, MacA, and an outer membrane component, TolC. The complex forms a large protein conduit and can translocate molecules across both the inner and outer membranes. Interacts with MacA.

It localises to the cell inner membrane. In terms of biological role, part of the tripartite efflux system MacAB-TolC. MacB is a non-canonical ABC transporter that contains transmembrane domains (TMD), which form a pore in the inner membrane, and an ATP-binding domain (NBD), which is responsible for energy generation. Confers resistance against macrolides. The protein is Macrolide export ATP-binding/permease protein MacB of Salmonella paratyphi A (strain ATCC 9150 / SARB42).